Reading from the N-terminus, the 802-residue chain is Sucrose synthase 1 (802 aa).

The segment at 272–749 (MMFNVVILSP…GLQRIYEKYT (478 aa)) is GT-B glycosyltransferase.

Belongs to the glycosyltransferase 1 family. Plant sucrose synthase subfamily.

The enzyme catalyses an NDP-alpha-D-glucose + D-fructose = a ribonucleoside 5'-diphosphate + sucrose + H(+). In terms of biological role, sucrose-cleaving enzyme that provides UDP-glucose and fructose for various metabolic pathways. Most active in the sink tissues where it is responsible for the breakdown of the arriving sucrose. This chain is Sucrose synthase 1 (SH-1), found in Zea mays (Maize).